A 544-amino-acid chain; its full sequence is Serine/threonine-protein kinase PAK 3 (544 aa).

A disordered region spans residues 1–73; it reads MSDSLDNEEK…EKERPEISLP (73 aa). Residues S2 and S4 each carry the phosphoserine modification. Residues 18–32 are compositionally biased toward polar residues; sequence MNSNNRDSSALNHSS. S50 bears the Phosphoserine; by autocatalysis mark. Basic and acidic residues predominate over residues 63-73; it reads KEKERPEISLP. The interval 65-108 is GTPase-binding; the sequence is KERPEISLPSDFEHTIHVGFDAVTGEFTGIPEQWARLLQTSNIT. Residues 65–135 are autoregulatory region; the sequence is KERPEISLPS…YDSKETVNNQ (71 aa). The CRIB domain maps to 70–83; the sequence is ISLPSDFEHTIHVG. A linker region spans residues 84-267; that stretch reads FDAVTGEFTG…IVSVGDPKKK (184 aa). Residue S139 is modified to Phosphoserine; by autocatalysis. 2 disordered regions span residues 156-197 and 213-248; these read SNTK…RPEH and PAAPNKEATPPSAENANSSTLYRNTDRQRKKSKMTD. Position 171 is a phosphoserine (S171). Positions 171-186 are enriched in acidic residues; sequence SEEEDEEEEEEEDDNE. Residues 224-235 are compositionally biased toward polar residues; sequence SAENANSSTLYR. The Protein kinase domain occupies 268–519; that stretch reads YTRFEKIGQG…AKELLQHPFL (252 aa). ATP is bound by residues 274-282 and K297; that span reads IGQGASGTV. D387 (proton acceptor) is an active-site residue. Residue T421 is modified to Phosphothreonine; by autocatalysis.

This sequence belongs to the protein kinase superfamily. STE Ser/Thr protein kinase family. STE20 subfamily. In terms of assembly, interacts tightly with GTP-bound but not GDP-bound CDC42/p21 and RAC1. Shows highly specific binding to the SH3 domains of phospholipase C-gamma and of adapter protein NCK. Interacts with the C-terminal of APP. Interacts with ARHGEF6 and ARHGEF7. Interacts with GIT1 and GIT2. Mg(2+) is required as a cofactor. Autophosphorylated when activated by CDC42/p21. Post-translationally, neddylated. Detected at high levels in the brain and at low levels in the testis.

Its subcellular location is the cytoplasm. The catalysed reaction is L-seryl-[protein] + ATP = O-phospho-L-seryl-[protein] + ADP + H(+). It catalyses the reaction L-threonyl-[protein] + ATP = O-phospho-L-threonyl-[protein] + ADP + H(+). With respect to regulation, activated by binding small G proteins. Binding of GTP-bound CDC42 or RAC1 to the autoregulatory region releases monomers from the autoinhibited dimer, enables phosphorylation of Thr-421 and allows the kinase domain to adopt an active structure. In terms of biological role, serine/threonine protein kinase that plays a role in a variety of different signaling pathways including cytoskeleton regulation, cell migration, or cell cycle regulation. Plays a role in dendrite spine morphogenesis as well as synapse formation and plasticity. Acts as a downstream effector of the small GTPases CDC42 and RAC1. Activation by the binding of active CDC42 and RAC1 results in a conformational change and a subsequent autophosphorylation on several serine and/or threonine residues. Phosphorylates MAPK4 and MAPK6 and activates the downstream target MAPKAPK5, a regulator of F-actin polymerization and cell migration. Additionally, phosphorylates TNNI3/troponin I to modulate calcium sensitivity and relaxation kinetics of thin myofilaments. May also be involved in early neuronal development. In hippocampal neurons, necessary for the formation of dendritic spines and excitatory synapses; this function is dependent on kinase activity and may be exerted by the regulation of actomyosin contractility through the phosphorylation of myosin II regulatory light chain (MLC). This chain is Serine/threonine-protein kinase PAK 3 (Pak3), found in Rattus norvegicus (Rat).